An 89-amino-acid chain; its full sequence is METPLDLLKLNLDERVYIKLRGARTLVGTLQAFDSHCNIVLSDAVETIYQLNNEELSESERRCEMVFIRGDTVTLISTPSEDDDGAVEI.

One can recognise a Sm domain in the interval 3–82; it reads TPLDLLKLNL…VTLISTPSED (80 aa).

Belongs to the snRNP Sm proteins family. As to quaternary structure, component of the heptameric LSM1-LSM7 complex that forms a seven-membered ring structure with a donut shape. The LSm subunits are arranged in the order LSM1, LSM2, LSM3, LSM6, LSM5, LSM7 and LSM4. Except for LSM1, where a C-terminal helix crosses the ring structure to form additional interactions with LSM3 and LSM6, each subunit interacts only with its two neighboring subunits. The LSM1-LSM7 complex interacts with PAT1; within the complex PAT1 has direct interactions with LSM2 and LSM3. The LSM1-LSM7 complex interacts with XRN1. Component of the heptameric LSM2-LSM8 complex that forms a seven-membered ring structure with a donut shape; an RNA strand can pass through the hole in the center of the ring structure. The LSm subunits are arranged in the order LSM8, LSM2, LSM3, LSM6, LSM5, LSM7 and LSM4. Component of the spliceosome U4/U6-U5 tri-snRNP complex composed of the U4, U6 and U5 snRNAs and at least PRP3, PRP4, PRP6, PRP8, PRP18, PRP31, PRP38, SNU13, SNU23, SNU66, SNU114, SPP381, SMB1, SMD1, SMD2, SMD3, SMX2, SMX3, LSM2, LSM3, LSM4, LSM5, LSM6, LSM7, LSM8, BRR2 and DIB1. May be found in a complex comprising LSM2-LSM7 without LSM1 or LSM8; the complex associates with pre-P RNA and snoRNA SNR5.

It is found in the nucleus. It localises to the nucleolus. The protein localises to the cytoplasm. Functionally, component of LSm protein complexes, which are involved in RNA processing and may function in a chaperone-like manner. Component of the cytoplasmic LSM1-LSM7 complex which is involved in mRNA degradation by activating the decapping step. Together with PAT1, the LSM1-LSM7 complex binds to osmotic stress-activated mRNAs to attenuate the osmotic stress response, probably by limiting ribosome access to the mRNA and consequently translation. Component of the nuclear LSM2-LSM8 complex, which is involved in spliceosome assembly. The LSM2-LSM8 complex plays a role in the biogenesis of the spliceosomal U4/U6-U5 tri-snRNP complex by accelerating PRP24-mediated annealing of U4/U6 di-snRNA. The LSM2-LSM8 complex binds U6 snRNA terminating with a non-cyclic 3' phosphate group. LSM2-LSM8 is probably also involved in degradation of nuclear pre-mRNA by targeting them for decapping. LSM2-LSM8 could be involved in processing of pre-tRNAs, pre-rRNAs and U3 snoRNA, although involvement may be indirect. In a complex that probably contains LSM2-LSM7, but not LSM1 or LSM8, associates with the precursor of the RNA component of RNase P (pre-P RNA) and may be involved in maturing pre-P RNA; the complex also associates with snoRNA SNR5. This is LSM complex subunit LSM3 (LSM3) from Saccharomyces cerevisiae (strain ATCC 204508 / S288c) (Baker's yeast).